Here is a 70-residue protein sequence, read N- to C-terminus: MRAIIYLLLISAMVFSMTKAVPEEEGLQLSEDERGGCLPHNRFCNALSGPRCCSGLKCKELSIYDSRCLG.

Positions 1–20 (MRAIIYLLLISAMVFSMTKA) are cleaved as a signal peptide. Residues 21 to 34 (VPEEEGLQLSEDER) constitute a propeptide that is removed on maturation. Intrachain disulfides connect cysteine 37-cysteine 53, cysteine 44-cysteine 58, and cysteine 52-cysteine 68. At leucine 69 the chain carries Leucine amide.

Belongs to the neurotoxin 01 (U2-agtx) family. As to expression, expressed by the venom gland.

The protein localises to the secreted. Insect active toxin causing rapid but reversible paralysis in crickets. No activity shown in mammals. Does not show effect on mammalian voltage-gated calcium channels. In Agelena orientalis (Funnel-web spider), this protein is U2-agatoxin-Ao1d.